The sequence spans 309 residues: Virulence regulon transcriptional activator VirB (309 aa).

The H-T-H motif DNA-binding region spans 152-171; sequence KDIAKKENLSRAKVTRAFQA.

The protein belongs to the ParB family.

In terms of biological role, transcription activator for the invasion antigens IpaB, IpaC and IpaD. VirB is itself regulated by VirF. The polypeptide is Virulence regulon transcriptional activator VirB (virB) (Shigella flexneri).